The following is a 407-amino-acid chain: Probable NADPH dehydrogenase (407 aa).

Residues Thr-49 and Gln-124 each contribute to the FMN site. Tyr-206 functions as the Proton donor in the catalytic mechanism. 2 residues coordinate FMN: Arg-254 and Arg-357.

Belongs to the NADH:flavin oxidoreductase/NADH oxidase family. FMN is required as a cofactor.

It catalyses the reaction A + NADPH + H(+) = AH2 + NADP(+). Oxidoreductase that binds mammalian estrogens with high affinity. The chain is Probable NADPH dehydrogenase from Candida albicans (strain SC5314 / ATCC MYA-2876) (Yeast).